The chain runs to 354 residues: S-adenosylmethionine:tRNA ribosyltransferase-isomerase (354 aa).

This sequence belongs to the QueA family. In terms of assembly, monomer.

It is found in the cytoplasm. The enzyme catalyses 7-aminomethyl-7-carbaguanosine(34) in tRNA + S-adenosyl-L-methionine = epoxyqueuosine(34) in tRNA + adenine + L-methionine + 2 H(+). Its pathway is tRNA modification; tRNA-queuosine biosynthesis. Functionally, transfers and isomerizes the ribose moiety from AdoMet to the 7-aminomethyl group of 7-deazaguanine (preQ1-tRNA) to give epoxyqueuosine (oQ-tRNA). In Salmonella dublin (strain CT_02021853), this protein is S-adenosylmethionine:tRNA ribosyltransferase-isomerase.